A 535-amino-acid chain; its full sequence is Glutamate--cysteine ligase (535 aa).

The protein belongs to the glutamate--cysteine ligase type 1 family. Type 1 subfamily.

The enzyme catalyses L-cysteine + L-glutamate + ATP = gamma-L-glutamyl-L-cysteine + ADP + phosphate + H(+). It functions in the pathway sulfur metabolism; glutathione biosynthesis; glutathione from L-cysteine and L-glutamate: step 1/2. In Pseudomonas syringae pv. syringae, this protein is Glutamate--cysteine ligase.